The chain runs to 225 residues: MGKKSKRYRAALEKQPKEMLPLGKAVEVLKTYDATKFDQTVEVHMRLGVDPNQADQIIRGSLVLPHGIGKTQRVIVFAKGDAAKAAEEAGADEVGQEDLAKKIKDGWTDFDVCIAAPDMMGLVGPLGRVLGPRGLMPSPRAGTVTPDVGKVVSEYKAGKVEFRNDKGGNVHAMVGKMSFEANKLEENIASFVDFISAMKPQSIKGTYIKGVAICATMTPSVRVAT.

It belongs to the universal ribosomal protein uL1 family. As to quaternary structure, part of the 50S ribosomal subunit.

In terms of biological role, binds directly to 23S rRNA. The L1 stalk is quite mobile in the ribosome, and is involved in E site tRNA release. Protein L1 is also a translational repressor protein, it controls the translation of the L11 operon by binding to its mRNA. This chain is Large ribosomal subunit protein uL1, found in Rhodopirellula baltica (strain DSM 10527 / NCIMB 13988 / SH1).